Consider the following 980-residue polypeptide: Conserved oligomeric Golgi complex subunit 1 (980 aa).

Position 2 is an N-acetylalanine (Ala2). Position 7 is a phosphoserine (Ser7). Lys598 carries the post-translational modification N6-acetyllysine. The span at 923 to 934 (RATSRSVETQAQ) shows a compositional bias: polar residues. The interval 923–950 (RATSRSVETQAQVGPPALSRVGDPTTHP) is disordered.

Belongs to the COG1 family. As to quaternary structure, component of the conserved oligomeric Golgi complex which is composed of eight different subunits and is required for normal Golgi morphology and localization.

Its subcellular location is the golgi apparatus membrane. Its function is as follows. Required for normal Golgi function. The protein is Conserved oligomeric Golgi complex subunit 1 (Cog1) of Mus musculus (Mouse).